The following is a 517-amino-acid chain: Histone H4 transcription factor (517 aa).

C2H2-type zinc fingers lie at residues 15-39 (LQCE…VTQH), 129-153 (FLCL…VEAH), and 169-193 (VLCG…LRSH). Residues 199–221 (VACPTCGGMFANNTKFLDHIRRQ) form a C2H2-type 4; degenerate zinc finger. 5 consecutive C2H2-type zinc fingers follow at residues 229-251 (FQCS…MRNH), 255-278 (YKCP…RFRH), 284-306 (FKCD…LDTH), 312-337 (YRCD…RKVH), and 345-368 (YKCH…RKKH). The tract at residues 373–517 (PSGHPRFRYK…IAEEPEIQMV (145 aa)) is interaction with NPAT. The segment at 374–407 (SGHPRFRYKEHEDGYMRLQLVRYESVELTQQLLR) is required for activation of histone H4 transcription and contributes to DNA-binding. Positions 431–460 (TVPGEPGRKEEEEEGKGSEGTALSASQDNP) are disordered. The span at 451-460 (TALSASQDNP) shows a compositional bias: polar residues.

As to quaternary structure, binds MBD2 and a histone deacetylase complex. Interacts with NPAT. Post-translationally, ubiquitinated. Ubiquitination may lead to proteasome-mediated degradation. As to expression, ubiquitous. Highly expressed in brain, heart, skeletal muscle, spleen, kidney, small intestine, placenta and liver.

The protein localises to the nucleus. Transcriptional repressor that binds to the consensus sequence 5'-CGGACGTT-3' and to the RB1 promoter. Transcriptional activator that promotes histone H4 gene transcription at the G1/S phase transition in conjunction with NPAT. Also activates transcription of the ATM and PRKDC genes. Autoregulates its expression by associating with its own promoter. The sequence is that of Histone H4 transcription factor (HINFP) from Homo sapiens (Human).